A 33-amino-acid polypeptide reads, in one-letter code: Photosystem II reaction center protein T (33 aa).

A helical membrane pass occupies residues 3–23 (ALVYTFLLVSTLGIIFFAIFF).

This sequence belongs to the PsbT family. As to quaternary structure, PSII is composed of 1 copy each of membrane proteins PsbA, PsbB, PsbC, PsbD, PsbE, PsbF, PsbH, PsbI, PsbJ, PsbK, PsbL, PsbM, PsbT, PsbY, PsbZ, Psb30/Ycf12, at least 3 peripheral proteins of the oxygen-evolving complex and a large number of cofactors. It forms dimeric complexes.

Its subcellular location is the plastid. The protein localises to the chloroplast thylakoid membrane. In terms of biological role, found at the monomer-monomer interface of the photosystem II (PS II) dimer, plays a role in assembly and dimerization of PSII. PSII is a light-driven water plastoquinone oxidoreductase, using light energy to abstract electrons from H(2)O, generating a proton gradient subsequently used for ATP formation. The polypeptide is Photosystem II reaction center protein T (Helianthus annuus (Common sunflower)).